The primary structure comprises 307 residues: Phosphate import ATP-binding protein PstB (307 aa).

Residues methionine 1–aspartate 30 are disordered. Positions leucine 48–isoleucine 302 constitute an ABC transporter domain. Glycine 80–serine 87 provides a ligand contact to ATP.

This sequence belongs to the ABC transporter superfamily. Phosphate importer (TC 3.A.1.7) family. As to quaternary structure, the complex is composed of two ATP-binding proteins (PstB), two transmembrane proteins (PstC and PstA) and a solute-binding protein (PstS).

The protein resides in the cell membrane. The catalysed reaction is phosphate(out) + ATP + H2O = ADP + 2 phosphate(in) + H(+). Functionally, part of the ABC transporter complex PstSACB involved in phosphate import. Responsible for energy coupling to the transport system. This Haloquadratum walsbyi (strain DSM 16790 / HBSQ001) protein is Phosphate import ATP-binding protein PstB.